The following is a 586-amino-acid chain: Germ cell nuclear acidic protein (586 aa).

4 disordered regions span residues 17-119 (GWDR…LSSE), 176-202 (KAKTVKTPKSVQKTKKPAPSLCNSPVF), 217-266 (TWRT…SSEE), and 279-318 (LGGRTSASPMPSAEPKPQRPCLSTPSATGRKTGSQVPVKD). Positions 65-76 (SGKENRSQEEHI) are enriched in basic and acidic residues. The segment covering 94–107 (TPKSTFKQSASSAQ) has biased composition (polar residues). Residues 176–191 (KAKTVKTPKSVQKTKK) show a composition bias toward basic residues. Positions 225–244 (PPSDEHQATSKDREETEKPR) are enriched in basic and acidic residues. Over residues 299–313 (CLSTPSATGRKTGSQ) the composition is skewed to polar residues. The 100-residue stretch at 383-482 (KLYQLYNTSV…LYARKAMLAH (100 aa)) folds into the SprT-like domain.

This sequence belongs to the serine-aspartate repeat-containing protein (SDr) family.

The protein localises to the nucleus. It localises to the PML body. Its subcellular location is the chromosome. Its function is as follows. May play a role in DNA-protein cross-links (DPCs) clearance, ensuring the genomic stability by protecting germ cells and early embryos from various sources of damage. In Danio rerio (Zebrafish), this protein is Germ cell nuclear acidic protein (gcna).